The primary structure comprises 369 residues: MAVATSVATPVPTPAYSAGRAPAKEKKIYLPDTLAEWPWPRAINPHYAEAKEESQAWAASFNAFSPKAQHAFNRCDFNLLASLAYPLATKHGCRSGCDLMNLFFVIDEYSDIAPVEEVRQQKDIVMDALRNPHKPRPEGEWVGGEVARQFWALTITNASAQSQKHFIETFDEYLDSVVQQAEDRSESRIRDIQSYIDVRRNTIGAKPSFALLELDMDLPDEVLAHPTIQSLSLATIDMLCLGNDIVSYNLEQARGDASHNIITIVMNELNLDVNGAMRWVGDFHKQLEKQFFEAFNNLPKWGNAELDAQIAVYCDGLGNWVRANDQWSFESERYFGARGLEIMETKTLAMMPIQRTEALGPQLVDDSIL.

Asp-107, Asn-243, Ser-247, and Glu-251 together coordinate Mg(2+). The D(D/E)XX(D/E) motif signature appears at 107-111; the sequence is DEYSD. Positions 243-251 match the NSE motif motif; it reads NDIVSYNLE. (2E,6E)-farnesyl diphosphate-binding residues include Arg-333 and Tyr-334.

Belongs to the terpene synthase family. Mg(2+) serves as cofactor. The cofactor is Mn(2+). Ca(2+) is required as a cofactor. It depends on Ni(2+) as a cofactor. Requires Co(2+) as cofactor.

The catalysed reaction is (2E,6E)-farnesyl diphosphate = Delta(6)-protoilludene + diphosphate. The enzyme catalyses (2E,6E)-farnesyl diphosphate = alpha-selinene + diphosphate. Its activity is regulated as follows. Ca(2+) switches the cyclization mechanism of delta(6)-protoilludene synthase from 1,11 to 1,10 cyclization which leads to the production of beta-elemene. Its function is as follows. Terpene cyclase that catalyzes the cyclization of farnesyl diphosphate (FPP) to delta(6)-protoilludene. In presence of Ca(2+), a significant switch from 1,11 to a dual 1,11/1,10 cyclization occurs, producing beta-elemene as the major product, with lower levels of delta(6)-protoilludene and (E)-beta-caryophyllene, and traces of beta-selinene and alpha-selinene. This chain is Delta(6)-protoilludene synthase STEHIDRAFT_73029, found in Stereum hirsutum (strain FP-91666) (White-rot fungus).